The following is a 531-amino-acid chain: Flavin-containing monooxygenase 3 (531 aa).

FAD is bound by residues Gly9–Ser13, Glu32, Leu40–Trp41, and Asn61–Ser62. NADP(+)-binding positions include Thr60 to Asn61 and Ser195 to Asp198. The helical transmembrane segment at Phe511–Phe531 threads the bilayer.

It belongs to the FMO family. Requires FAD as cofactor. Liver.

The protein resides in the microsome membrane. It localises to the endoplasmic reticulum membrane. The catalysed reaction is trimethylamine + NADPH + O2 = trimethylamine N-oxide + NADP(+) + H2O. It carries out the reaction N,N-dimethylaniline + NADPH + O2 + H(+) = N,N-dimethylaniline N-oxide + NADP(+) + H2O. The enzyme catalyses hypotaurine + NADPH + O2 + H(+) = taurine + NADP(+) + H2O. It catalyses the reaction (S)-nicotine + NADPH + O2 = trans-(S)-nicotine N(1')-oxide + NADP(+) + H2O. The catalysed reaction is albendazole + NADPH + O2 + H(+) = albendazole S-oxide + NADP(+) + H2O. Essential hepatic enzyme that catalyzes the oxygenation of a wide variety of nitrogen- and sulfur-containing compounds including drugs as well as dietary compounds. Plays an important role in the metabolism of trimethylamine (TMA), via the production of trimethylamine N-oxide (TMAO) metabolite. TMA is generated by the action of gut microbiota using dietary precursors such as choline, choline containing compounds, betaine or L-carnitine. By regulating TMAO concentration, FMO3 directly impacts both platelet responsiveness and rate of thrombus formation. The chain is Flavin-containing monooxygenase 3 (FMO3) from Oryctolagus cuniculus (Rabbit).